A 283-amino-acid polypeptide reads, in one-letter code: Tyrosine recombinase THA_404 (283 aa).

In terms of domain architecture, Core-binding (CB) spans 1–86 (MDKVIEMFSD…SLNSFFNYLE (86 aa)). Positions 107-281 (KIPDFLTEDE…ADQEKFDAVK (175 aa)) constitute a Tyr recombinase domain. Residues Arg145, Lys170, His233, Arg236, and His259 contribute to the active site. Catalysis depends on Tyr268, which acts as the O-(3'-phospho-DNA)-tyrosine intermediate.

Belongs to the 'phage' integrase family.

The protein resides in the cytoplasm. In terms of biological role, site-specific tyrosine recombinase, which acts by catalyzing the cutting and rejoining of the recombining DNA molecules. The protein is Tyrosine recombinase THA_404 of Thermosipho africanus (strain TCF52B).